The primary structure comprises 355 residues: tRNA-specific 2-thiouridylase MnmA (355 aa).

ATP contacts are provided by residues 7–14 (GLSGGVDS) and L33. The active-site Nucleophile is the C94. A disulfide bridge links C94 with C193. G119 is an ATP binding site. The segment at 143-145 (KDQ) is interaction with tRNA. C193 serves as the catalytic Cysteine persulfide intermediate. Residues 298–299 (RY) are interaction with tRNA.

This sequence belongs to the MnmA/TRMU family.

The protein resides in the cytoplasm. It carries out the reaction S-sulfanyl-L-cysteinyl-[protein] + uridine(34) in tRNA + AH2 + ATP = 2-thiouridine(34) in tRNA + L-cysteinyl-[protein] + A + AMP + diphosphate + H(+). In terms of biological role, catalyzes the 2-thiolation of uridine at the wobble position (U34) of tRNA, leading to the formation of s(2)U34. This chain is tRNA-specific 2-thiouridylase MnmA, found in Acaryochloris marina (strain MBIC 11017).